The following is a 375-amino-acid chain: Alanine racemase (375 aa).

Lys35 functions as the Proton acceptor; specific for D-alanine in the catalytic mechanism. An N6-(pyridoxal phosphate)lysine modification is found at Lys35. Residue Arg133 coordinates substrate. The active-site Proton acceptor; specific for L-alanine is Tyr261. Met309 contacts substrate.

This sequence belongs to the alanine racemase family. Requires pyridoxal 5'-phosphate as cofactor.

It catalyses the reaction L-alanine = D-alanine. Its pathway is amino-acid biosynthesis; D-alanine biosynthesis; D-alanine from L-alanine: step 1/1. Catalyzes the interconversion of L-alanine and D-alanine. May also act on other amino acids. This Syntrophobacter fumaroxidans (strain DSM 10017 / MPOB) protein is Alanine racemase (alr).